A 270-amino-acid chain; its full sequence is tRNA pseudouridine synthase A (270 aa).

Catalysis depends on Asp51, which acts as the Nucleophile. A substrate-binding site is contributed by Tyr109.

Belongs to the tRNA pseudouridine synthase TruA family. In terms of assembly, homodimer.

It carries out the reaction uridine(38/39/40) in tRNA = pseudouridine(38/39/40) in tRNA. Formation of pseudouridine at positions 38, 39 and 40 in the anticodon stem and loop of transfer RNAs. This chain is tRNA pseudouridine synthase A, found in Burkholderia mallei (strain ATCC 23344).